The following is a 544-amino-acid chain: Chaperonin GroEL 1 (544 aa).

Residues 30 to 33 (TLGP), Lys-51, 87 to 91 (DGTTT), Gly-415, 479 to 481 (NAA), and Asp-495 contribute to the ATP site.

This sequence belongs to the chaperonin (HSP60) family. In terms of assembly, forms a cylinder of 14 subunits composed of two heptameric rings stacked back-to-back. Interacts with the co-chaperonin GroES.

The protein resides in the cytoplasm. It carries out the reaction ATP + H2O + a folded polypeptide = ADP + phosphate + an unfolded polypeptide.. In terms of biological role, together with its co-chaperonin GroES, plays an essential role in assisting protein folding. The GroEL-GroES system forms a nano-cage that allows encapsulation of the non-native substrate proteins and provides a physical environment optimized to promote and accelerate protein folding. The protein is Chaperonin GroEL 1 of Vibrio cholerae serotype O1 (strain ATCC 39315 / El Tor Inaba N16961).